The sequence spans 127 residues: MENIGIDLVEIKKIKKIGKDILAARILSSEEHQIYQIIQNPQSQLTFLAGRWASKEALFKAFQTPQKIDPTCQNYCNWSILNDKKGAPYVKNNTCTTFFNPILISITHTDNYALALVIVKKLPQSTS.

Positions 7 and 56 each coordinate Mg(2+).

It belongs to the P-Pant transferase superfamily. AcpS family. Mg(2+) is required as a cofactor.

It localises to the cytoplasm. The enzyme catalyses apo-[ACP] + CoA = holo-[ACP] + adenosine 3',5'-bisphosphate + H(+). Its function is as follows. Transfers the 4'-phosphopantetheine moiety from coenzyme A to a Ser of acyl-carrier-protein. The protein is Holo-[acyl-carrier-protein] synthase of Onion yellows phytoplasma (strain OY-M).